Consider the following 640-residue polypeptide: Serine/threonine-protein kinase WNG1 (640 aa).

An N-terminal signal peptide occupies residues 1-70; that stretch reads MPEQDLASGF…GVLCTVEAGA (70 aa). Disordered regions lie at residues 100–222 and 237–280; these read PEVT…AQPT and SHPD…DASN. Positions 104–120 are enriched in polar residues; that stretch reads HASSEGSPQFESSLSQQ. Positions 124 to 141 are enriched in basic and acidic residues; that stretch reads RPADRGEAHNGEEPRKDA. A compositionally biased stretch (low complexity) spans 175-186; sequence QRQASSAAESLA. Basic and acidic residues predominate over residues 248–279; that stretch reads FSKKQEGRRERRLAVRGDDSFARGHNRDRDAS. The 303-residue stretch at 291 to 593 folds into the Protein kinase domain; the sequence is WAKIAALATG…LKQVMEDPYF (303 aa). Lys-395 contacts ATP. The active-site Proton acceptor is the Asp-486. The disordered stretch occupies residues 609–640; that stretch reads PFRGDFSIDDPDAGGKMYIPPSKEQDHEQENE. Residues 631–640 are compositionally biased toward basic and acidic residues; sequence KEQDHEQENE.

Belongs to the protein kinase superfamily. STE Ser/Thr protein kinase family. WNG subfamily. Mg(2+) is required as a cofactor.

It localises to the cytoplasmic granule. The protein resides in the secreted. It is found in the parasitophorous vacuole lumen. It carries out the reaction L-seryl-[protein] + ATP = O-phospho-L-seryl-[protein] + ADP + H(+). The enzyme catalyses L-threonyl-[protein] + ATP = O-phospho-L-threonyl-[protein] + ADP + H(+). Its function is as follows. Serine/threonine-protein kinase which, at the tachyzoite stage, phosphorylates several parasitophorous vacuole (PV)-resident proteins such as GRA2, GRA6 and GRA7. By phosphorylating GRA2 and GRA6, regulates the formation of a functional intravacuolar network (IVN); IVN is composed of membranous tubules that bud from the PV membrane into the vacuolar lumen. Plays a role in the establishement of chronic infection in the host by controlling cyst formation in the host tissues. This Toxoplasma gondii protein is Serine/threonine-protein kinase WNG1.